The sequence spans 595 residues: Chaperone protein HscA homolog (595 aa).

The protein belongs to the heat shock protein 70 family.

Chaperone involved in the maturation of iron-sulfur cluster-containing proteins. Has a low intrinsic ATPase activity which is markedly stimulated by HscB. This is Chaperone protein HscA homolog from Rickettsia africae (strain ESF-5).